We begin with the raw amino-acid sequence, 412 residues long: Serine hydroxymethyltransferase (412 aa).

Residues Leu117 and 121-123 (GHL) contribute to the (6S)-5,6,7,8-tetrahydrofolate site. Position 226 is an N6-(pyridoxal phosphate)lysine (Lys226).

The protein belongs to the SHMT family. In terms of assembly, homodimer. Requires pyridoxal 5'-phosphate as cofactor.

It localises to the cytoplasm. The catalysed reaction is (6R)-5,10-methylene-5,6,7,8-tetrahydrofolate + glycine + H2O = (6S)-5,6,7,8-tetrahydrofolate + L-serine. The protein operates within one-carbon metabolism; tetrahydrofolate interconversion. Its pathway is amino-acid biosynthesis; glycine biosynthesis; glycine from L-serine: step 1/1. Functionally, catalyzes the reversible interconversion of serine and glycine with tetrahydrofolate (THF) serving as the one-carbon carrier. This reaction serves as the major source of one-carbon groups required for the biosynthesis of purines, thymidylate, methionine, and other important biomolecules. Also exhibits THF-independent aldolase activity toward beta-hydroxyamino acids, producing glycine and aldehydes, via a retro-aldol mechanism. The sequence is that of Serine hydroxymethyltransferase from Symbiobacterium thermophilum (strain DSM 24528 / JCM 14929 / IAM 14863 / T).